The sequence spans 259 residues: Ubiquinone biosynthesis protein COQ4 homolog, mitochondrial (259 aa).

The Zn(2+) site is built by H162, D163, H166, and E178.

This sequence belongs to the COQ4 family. In terms of assembly, component of a multi-subunit COQ enzyme complex. The cofactor is Zn(2+).

The protein resides in the mitochondrion inner membrane. It catalyses the reaction a 4-hydroxy-3-methoxy-5-(all-trans-polyprenyl)benzoate + H(+) = a 2-methoxy-6-(all-trans-polyprenyl)phenol + CO2. Its pathway is cofactor biosynthesis; ubiquinone biosynthesis. Its function is as follows. Lyase that catalyzes the C1-decarboxylation of 4-hydroxy-3-methoxy-5-(all-trans-polyprenyl)benzoic acid into 2-methoxy-6-(all-trans-polyprenyl)phenol during ubiquinone biosynthesis. This is Ubiquinone biosynthesis protein COQ4 homolog, mitochondrial from Bombyx mori (Silk moth).